A 501-amino-acid polypeptide reads, in one-letter code: MPDAVGAIDQGTTSTRFIVFDRRGTIRAQAQREHEQIFPRPGWVEHDPREIWRNTHAVMREGLARAGLVPGDLAAIGLTNQRETALLWDRRTGEPLHNALVWQDTRTDRTVAALARDGGRDRFRAVTGLPLASYFSASKLAWLLDHVEGARAKAEDGTALFGTIDSWLVWNLTGGPDGGLHVTDVTNASRTQLMSLATLDWDEAMLGVFRIPRAVLPEIVSSSAVLGETRDPFPGVPVGGILGDQQAALFGQTCFAPGEAKNTYGTGCFALMNTGPEPVASTAGLVTTVAYRLDGRPPAYALEGSIAITGALVQWLRDNLGLIGASSEIEGLARSVEDNGGVYVVPAFSGLYAPHWRDDARGLIIGLTRYANKGHIARACLEATAYQTREVLEAMERDSGCPLSELRCDGGMTVNDLLMQFQADILDRPTLRPKVSETTALGAAYAAGLATGFWKTLEDLRDNWAVDKRWHPHIAAEERRALFAGWGRAVERSFGWVEENA.

Residue T12 participates in ADP binding. The ATP site is built by T12, T13, and S14. T12 is a binding site for sn-glycerol 3-phosphate. R16 provides a ligand contact to ADP. Positions 82, 83, 134, and 244 each coordinate sn-glycerol 3-phosphate. Positions 82, 83, 134, 244, and 245 each coordinate glycerol. 2 residues coordinate ADP: T266 and G310. ATP contacts are provided by T266, G310, Q314, and G411. G411 and N415 together coordinate ADP.

This sequence belongs to the FGGY kinase family.

The enzyme catalyses glycerol + ATP = sn-glycerol 3-phosphate + ADP + H(+). The protein operates within polyol metabolism; glycerol degradation via glycerol kinase pathway; sn-glycerol 3-phosphate from glycerol: step 1/1. Its activity is regulated as follows. Inhibited by fructose 1,6-bisphosphate (FBP). Its function is as follows. Key enzyme in the regulation of glycerol uptake and metabolism. Catalyzes the phosphorylation of glycerol to yield sn-glycerol 3-phosphate. This Methylorubrum populi (strain ATCC BAA-705 / NCIMB 13946 / BJ001) (Methylobacterium populi) protein is Glycerol kinase.